A 347-amino-acid polypeptide reads, in one-letter code: GMP reductase (347 aa).

Residue Ala-108–Ala-131 participates in NADP(+) binding. Gly-181 and Gly-183 together coordinate K(+). Cys-186 (thioimidate intermediate) is an active-site residue. Ile-216–Val-239 contributes to the NADP(+) binding site.

The protein belongs to the IMPDH/GMPR family. GuaC type 1 subfamily. Homotetramer.

It carries out the reaction IMP + NH4(+) + NADP(+) = GMP + NADPH + 2 H(+). Its function is as follows. Catalyzes the irreversible NADPH-dependent deamination of GMP to IMP. It functions in the conversion of nucleobase, nucleoside and nucleotide derivatives of G to A nucleotides, and in maintaining the intracellular balance of A and G nucleotides. The sequence is that of GMP reductase from Shigella boydii serotype 18 (strain CDC 3083-94 / BS512).